The chain runs to 134 residues: Small ribosomal subunit protein uS8 (134 aa).

The protein belongs to the universal ribosomal protein uS8 family. As to quaternary structure, part of the 30S ribosomal subunit. Contacts proteins S5 and S12.

In terms of biological role, one of the primary rRNA binding proteins, it binds directly to 16S rRNA central domain where it helps coordinate assembly of the platform of the 30S subunit. The sequence is that of Small ribosomal subunit protein uS8 from Pseudothermotoga lettingae (strain ATCC BAA-301 / DSM 14385 / NBRC 107922 / TMO) (Thermotoga lettingae).